The following is a 347-amino-acid chain: NADH-ubiquinone oxidoreductase chain 2 (347 aa).

A run of 11 helical transmembrane segments spans residues 1-21 (MNPIVFSTILTTAIMGTMIVM), 25-45 (HWLMIWIGFEMNLLAIIPILM), 60-80 (FLTQATASMLLMMAIIINLMF), 89-109 (IFNPTASIIMTSALIMKLGLS), 111-131 (FHFWVPEVTQGIPLVSGLILL), 149-169 (INLDMLMTSALLSILVGGWGG), 178-198 (IMAYSSIAHMGWMTAILTYNP), 201-221 (TALNMLIYIMMTLTTFMLFML), 242-262 (SLILITMLSLGGLPPLSGFIP), 274-294 (DSIILPTSMAIMALLNLYFYM), and 323-343 (MNFLPTLIIMSTLLLPLTPIM).

This sequence belongs to the complex I subunit 2 family. In terms of assembly, core subunit of respiratory chain NADH dehydrogenase (Complex I) which is composed of 45 different subunits. Interacts with TMEM242.

It localises to the mitochondrion inner membrane. It carries out the reaction a ubiquinone + NADH + 5 H(+)(in) = a ubiquinol + NAD(+) + 4 H(+)(out). In terms of biological role, core subunit of the mitochondrial membrane respiratory chain NADH dehydrogenase (Complex I) which catalyzes electron transfer from NADH through the respiratory chain, using ubiquinone as an electron acceptor. Essential for the catalytic activity and assembly of complex I. The sequence is that of NADH-ubiquinone oxidoreductase chain 2 from Ceratotherium simum (White rhinoceros).